Reading from the N-terminus, the 142-residue chain is Neuritin (142 aa).

The signal sequence occupies residues 1–27; it reads MGLKLNGRYISLILAVQIAYLVQAVRA. G116 is lipidated: GPI-anchor amidated glycine. Positions 117-142 are cleaved as a propeptide — removed in mature form; it reads AAGSLLPALSVLLVSLSAALATWFSF.

The protein belongs to the neuritin family. As to quaternary structure, component of the outer core of AMPAR complex. AMPAR complex consists of an inner core made of 4 pore-forming GluA/GRIA proteins (GRIA1, GRIA2, GRIA3 and GRIA4) and 4 major auxiliary subunits arranged in a twofold symmetry. One of the two pairs of distinct binding sites is occupied either by CNIH2, CNIH3 or CACNG2, CACNG3. The other harbors CACNG2, CACNG3, CACNG4, CACNG8 or GSG1L. This inner core of AMPAR complex is complemented by outer core constituents binding directly to the GluA/GRIA proteins at sites distinct from the interaction sites of the inner core constituents. Outer core constituents include at least PRRT1, PRRT2, CKAMP44/SHISA9, FRRS1L and NRN1. The proteins of the inner and outer core serve as a platform for other, more peripherally associated AMPAR constituents. Alone or in combination, these auxiliary subunits control the gating and pharmacology of the AMPAR complex and profoundly impact their biogenesis and protein processing. In terms of tissue distribution, expressed in the brain (at protein level).

It localises to the cell membrane. It is found in the synapse. Promotes neurite outgrowth and especially branching of neuritic processes in primary hippocampal and cortical cells. The chain is Neuritin (Nrn1) from Mus musculus (Mouse).